We begin with the raw amino-acid sequence, 1456 residues long: Retrovirus-related Pol polyprotein from transposon RE2 (1456 aa).

The interval 205–252 is disordered; the sequence is NVVTHRNTNTNRNQNNRGDNRNYNNNNNRSNSWQPSSSGSRSDNRQPK. The span at 210-245 shows a compositional bias: low complexity; sequence RNTNTNRNQNNRGDNRNYNNNNNRSNSWQPSSSGSR. The CCHC-type zinc finger occupies 257–273; sequence RCQICSVQGHSAKRCPQ. Residues 276-291 show a composition bias toward low complexity; it reads QFQSTTNQQQSTSPFT. Residues 276–295 are disordered; the sequence is QFQSTTNQQQSTSPFTPWQP. Aspartate 313 (for protease activity) is an active-site residue. The 164-residue stretch at 498 to 661 folds into the Integrase catalytic domain; it reads TSSKPLEYIY…SPFQKLFGQP (164 aa). Mg(2+) contacts are provided by aspartate 509 and aspartate 571. A compositionally biased stretch (polar residues) spans 738–754; the sequence is STSQEQRSDSAPNWPSH. Residues 738–896 form a disordered region; the sequence is STSQEQRSDS…PPLPPVLPAP (159 aa). A compositionally biased stretch (low complexity) spans 793–814; the sequence is SSSNLPSSSISSPSSSEPTAPS. The span at 816–827 shows a compositional bias: polar residues; sequence NGPQPTAQPHQT. 2 stretches are compositionally biased toward low complexity: residues 828–841 and 849–886; these read QNSNSNSPILNNPN and SPNQNSPLPQSPISSPHIPTPSTSISEPNSPSSSSTST. Over residues 887-896 the composition is skewed to pro residues; that stretch reads PPLPPVLPAP. Positions 965–1208 constitute a Reverse transcriptase Ty1/copia-type domain; sequence NHTWDLVPPP…LTAKPVATPM (244 aa).

It catalyses the reaction DNA(n) + a 2'-deoxyribonucleoside 5'-triphosphate = DNA(n+1) + diphosphate. In Arabidopsis thaliana (Mouse-ear cress), this protein is Retrovirus-related Pol polyprotein from transposon RE2 (RE2).